Here is a 226-residue protein sequence, read N- to C-terminus: Thymidylate kinase (226 aa).

12 to 19 (GIDGAGKS) contributes to the ATP binding site.

This sequence belongs to the thymidylate kinase family.

The catalysed reaction is dTMP + ATP = dTDP + ADP. Functionally, phosphorylation of dTMP to form dTDP in both de novo and salvage pathways of dTTP synthesis. This is Thymidylate kinase from Verminephrobacter eiseniae (strain EF01-2).